The primary structure comprises 452 residues: Aspartyl/glutamyl-tRNA(Asn/Gln) amidotransferase subunit B (452 aa).

It belongs to the GatB/GatE family. GatB subfamily. In terms of assembly, heterotrimer of A, B and C subunits.

The enzyme catalyses L-glutamyl-tRNA(Gln) + L-glutamine + ATP + H2O = L-glutaminyl-tRNA(Gln) + L-glutamate + ADP + phosphate + H(+). The catalysed reaction is L-aspartyl-tRNA(Asn) + L-glutamine + ATP + H2O = L-asparaginyl-tRNA(Asn) + L-glutamate + ADP + phosphate + 2 H(+). Allows the formation of correctly charged Asn-tRNA(Asn) or Gln-tRNA(Gln) through the transamidation of misacylated Asp-tRNA(Asn) or Glu-tRNA(Gln) in organisms which lack either or both of asparaginyl-tRNA or glutaminyl-tRNA synthetases. The reaction takes place in the presence of glutamine and ATP through an activated phospho-Asp-tRNA(Asn) or phospho-Glu-tRNA(Gln). This is Aspartyl/glutamyl-tRNA(Asn/Gln) amidotransferase subunit B from Methanosphaera stadtmanae (strain ATCC 43021 / DSM 3091 / JCM 11832 / MCB-3).